The following is a 296-amino-acid chain: Non-selective voltage-gated ion channel VDAC2 (296 aa).

Lys-25 provides a ligand contact to ATP. Lys-25 is covalently cross-linked (Glycyl lysine isopeptide (Lys-Gly) (interchain with G-Cter in ubiquitin)). Residue Ser-26 is modified to Phosphoserine. Position 33 (Lys-33) interacts with ATP. Lys-33 carries the N6-acetyllysine; alternate modification. Lys-33 is modified (N6-succinyllysine; alternate). A Glycyl lysine isopeptide (Lys-Gly) (interchain with G-Cter in ubiquitin); alternate cross-link involves residue Lys-33. 2 beta stranded membrane-spanning segments follow: residues 39 to 48 (LVKLDVKTKS) and 52 to 60 (VEFTTSGSS). Residues Lys-66 and Lys-74 each participate in a glycyl lysine isopeptide (Lys-Gly) (interchain with G-Cter in ubiquitin) cross-link. Residues 67–77 (VNGSLETKYKW) traverse the membrane as a beta stranded segment. Tyr-80 bears the Phosphotyrosine mark. Transmembrane regions (beta stranded) follow at residues 82–89 (LTFTEKWN), 93–102 (TLGTEIAIED), and 108–117 (LKLTFDTTFS). A Phosphothreonine modification is found at Thr-120. Lys-122 carries the post-translational modification N6-acetyllysine; alternate. Lys-122 participates in a covalent cross-link: Glycyl lysine isopeptide (Lys-Gly) (interchain with G-Cter in ubiquitin); alternate. Lys-123 participates in a covalent cross-link: Glycyl lysine isopeptide (Lys-Gly) (interchain with G-Cter in ubiquitin). A run of 4 beta stranded transmembrane segments spans residues 124-133 (SGKIKSAYKR), 136-143 (LNLGCDVD), 150-158 (AIHGSAVFG), and 163-171 (LAGYQMTFD). Lys-174 participates in a covalent cross-link: Glycyl lysine isopeptide (Lys-Gly) (interchain with G-Cter in ubiquitin). Beta stranded transmembrane passes span 176–188 (KLTRNNFSVGYKT), 191–198 (FQLHTNVN), 202–211 (EFGGSIYQKV), 215–224 (LETAVNLAWT), 231–240 (RFGIAAKYKL), and 244–251 (ASISAKVN). Residue Ser-206 is modified to Phosphoserine. Ser-253 carries the post-translational modification Phosphoserine. NAD(+)-binding positions include 255 to 257 (LVG) and 273 to 277 (SALID). 2 beta stranded membrane-spanning segments follow: residues 255-264 (LVGVGYTQTL) and 267-276 (GVKLTLSALI). Position 279 is an N6-acetyllysine; alternate (Lys-279). A Glycyl lysine isopeptide (Lys-Gly) (interchain with G-Cter in ubiquitin); alternate cross-link involves residue Lys-279. Residues 286–295 (HKLGLGLELE) traverse the membrane as a beta stranded segment. A Glycyl lysine isopeptide (Lys-Gly) (interchain with G-Cter in ubiquitin) cross-link involves residue Lys-287.

Belongs to the eukaryotic mitochondrial porin family. As to quaternary structure, monomer, homodimer and higher order oligomers; formation of higher order structures is necessary for scramblase activity. Post-translationally, ubiquitinated by PRKN during mitophagy, leading to its degradation and enhancement of mitophagy. Deubiquitinated by USP30.

It localises to the mitochondrion outer membrane. The protein resides in the membrane. The enzyme catalyses chloride(in) = chloride(out). It carries out the reaction K(+)(in) = K(+)(out). It catalyses the reaction a 1,2-diacyl-sn-glycero-3-phospho-L-serine(in) = a 1,2-diacyl-sn-glycero-3-phospho-L-serine(out). The catalysed reaction is a 1,2-diacyl-sn-glycero-3-phosphocholine(in) = a 1,2-diacyl-sn-glycero-3-phosphocholine(out). The enzyme catalyses a 1,2-diacyl-sn-glycero-3-phospho-(1D-myo-inositol)(in) = a 1,2-diacyl-sn-glycero-3-phospho-(1D-myo-inositol)(out). Functionally, non-selective voltage-gated ion channel that mediates the transport of anions and cations through the mitochondrion outer membrane and plasma membrane. The channel adopts an open conformation at zero mV and a closed conformation at both positive and negative potentials. There are two populations of channels; the main that functions in a lower open-state conductance with lower ion selectivity, that switch, in a voltage-dependent manner, from the open to a low-conducting 'closed' state and the other that has a normal ion selectivity in the typical high conductance, 'open' state. Binds various lipids, including the sphingolipid ceramide, the phospholipid phosphatidylcholine, and the sterols cholesterol and oxysterol. Binding of ceramide promotes the mitochondrial outer membrane permeabilization (MOMP) apoptotic pathway. Catalyzes the scrambling of phospholipids across the outer mitochondrial membrane; the mechanism is unrelated to channel activity and is capable of translocating both anionic and zwitterionic phospholipids. The chain is Non-selective voltage-gated ion channel VDAC2 from Meleagris gallopavo (Wild turkey).